The primary structure comprises 572 residues: Transmembrane glycoprotein NMB (572 aa).

The N-terminal stretch at Met1–Ala22 is a signal peptide. The Extracellular segment spans residues Lys23 to Asn500. Residues Asn93, Asn134, Asn200, Asn249, Asn275, Asn296, Asn300, Asn306, and Asn312 are each glycosylated (N-linked (GlcNAc...) asparagine). Residues Ser251 to Pro338 form the PKD domain. The segment at Gly321–Lys359 is disordered. Low complexity predominate over residues Pro330 to Thr356. Asn461 and Asn469 each carry an N-linked (GlcNAc...) asparagine glycan. Residues Gly501–Tyr521 traverse the membrane as a helical segment. Residues Lys522 to Leu572 lie on the Cytoplasmic side of the membrane. A Phosphoserine modification is found at Ser544. Residues Arg556 to Asp558 carry the Cell attachment site motif.

Belongs to the PMEL/NMB family.

The protein resides in the cell membrane. The protein localises to the melanosome membrane. It localises to the early endosome membrane. In terms of biological role, could be a melanogenic enzyme. In Rattus norvegicus (Rat), this protein is Transmembrane glycoprotein NMB (Gpnmb).